Here is a 237-residue protein sequence, read N- to C-terminus: Lycopene beta-cyclase (237 aa).

7 helical membrane passes run 3 to 23 (TSYLTFLAVAVGPPLVALGVV), 38 to 58 (VGILLALALSYTTPWDNYLIA), 80 to 100 (EYLFVITQTLLTGLWVQALPL), 113 to 133 (AVLGALAGVLVGCGGAVLLTV), 137 to 157 (FYIGAIIAWAAPVLALQWAVG), 170 to 192 (AAVLVPTLFLSAADRYAIADGIW), and 213 to 233 (AFFFVTNVFVSQGLILYAWVL).

This sequence belongs to the lycopene beta-cyclase family.

The protein resides in the cell membrane. It carries out the reaction a carotenoid psi-end group = a carotenoid beta-end derivative. The enzyme catalyses all-trans-lycopene = gamma-carotene. The catalysed reaction is gamma-carotene = all-trans-beta-carotene. The protein operates within carotenoid biosynthesis; beta-carotene biosynthesis. Its function is as follows. Catalyzes the cyclization of both ends of lycopene to form beta-carotene, a retinal precursor. Is required for bacteriorhodopsin biogenesis, a light-driven proton pump with a covalently bound retinal cofactor. This chain is Lycopene beta-cyclase, found in Halobacterium salinarum (strain ATCC 29341 / DSM 671 / R1).